A 107-amino-acid chain; its full sequence is uncharacterized protein (107 aa).

Helical transmembrane passes span 20–40 (FISLISSSTSELPLFVVEVGI), 49–69 (PAILSILVLNALEVSSFISTV), and 86–106 (VVMLKILAFLLLEGIIIKLFL).

It localises to the membrane. This is an uncharacterized protein from Saccharomyces cerevisiae (strain ATCC 204508 / S288c) (Baker's yeast).